The chain runs to 189 residues: Elongation factor P (189 aa).

Lys-34 carries the N6-(3,6-diaminohexanoyl)-5-hydroxylysine modification.

Belongs to the elongation factor P family. Post-translationally, may be beta-lysylated on the epsilon-amino group of Lys-34 by the combined action of EpmA and EpmB, and then hydroxylated on the C5 position of the same residue by EpmC (if this protein is present). Lysylation is critical for the stimulatory effect of EF-P on peptide-bond formation. The lysylation moiety may extend toward the peptidyltransferase center and stabilize the terminal 3-CCA end of the tRNA. Hydroxylation of the C5 position on Lys-34 may allow additional potential stabilizing hydrogen-bond interactions with the P-tRNA.

It is found in the cytoplasm. It participates in protein biosynthesis; polypeptide chain elongation. In terms of biological role, involved in peptide bond synthesis. Alleviates ribosome stalling that occurs when 3 or more consecutive Pro residues or the sequence PPG is present in a protein, possibly by augmenting the peptidyl transferase activity of the ribosome. Modification of Lys-34 is required for alleviation. The chain is Elongation factor P from Alcanivorax borkumensis (strain ATCC 700651 / DSM 11573 / NCIMB 13689 / SK2).